A 395-amino-acid polypeptide reads, in one-letter code: MKKYNRIFVIVLDSLGIGAMPDSERFGDTDVDTFGHILERMQTLDIPNLTRLGMLNLHCGGQMQPAAEPIGRFTRLAEASNGKDTMTGHWEMMGIKTEKPFKTFTEHGFPPELIAELEKQCGKKVIGNKSASGTEIIEELGEEEIKNGSMIVYTSADSVLQICGNEETFDLQNLYRCCEIARKITLKDEWRVGRVIARPYVGKKKGEFVRTSNRHDYALKPTGLTALNALKDSGLDVISVGKINDIFCGEGITEAFRSKSSVHGMEQTIDICEKDFTGLCFVNLVDFDALWGHRRNVTGYGEEIEKFDKNLGILMEKLRDDDLLILTADHGNDPTYKGTDHTREYVPFIAYSKSMKGGGAIEEEATFAVIGATITDNFGVKMPEGTIGHSILEEL.

Asp13, Asp288, His293, Asp329, His330, and His341 together coordinate Mn(2+).

It belongs to the phosphopentomutase family. The cofactor is Mn(2+).

Its subcellular location is the cytoplasm. It catalyses the reaction 2-deoxy-alpha-D-ribose 1-phosphate = 2-deoxy-D-ribose 5-phosphate. The catalysed reaction is alpha-D-ribose 1-phosphate = D-ribose 5-phosphate. It functions in the pathway carbohydrate degradation; 2-deoxy-D-ribose 1-phosphate degradation; D-glyceraldehyde 3-phosphate and acetaldehyde from 2-deoxy-alpha-D-ribose 1-phosphate: step 1/2. In terms of biological role, isomerase that catalyzes the conversion of deoxy-ribose 1-phosphate (dRib-1-P) and ribose 1-phosphate (Rib-1-P) to deoxy-ribose 5-phosphate (dRib-5-P) and ribose 5-phosphate (Rib-5-P), respectively. The sequence is that of Phosphopentomutase from Agathobacter rectalis (strain ATCC 33656 / DSM 3377 / JCM 17463 / KCTC 5835 / VPI 0990) (Eubacterium rectale).